A 540-amino-acid polypeptide reads, in one-letter code: MEKAKLSSALFAGTHFDRKRFAGDFARFRQGPPAPDVASAAAPSPEKKRKRQSKAKAKKSKKRRAEGADSASDAVEGFSVFKGLAAKKDEDDSEKKVETGKSEDSEVVRRRKEVEREIERAAILRKKFDIHISGQNVPAPLENFEELVSRYGCDSYLVGNLSKLGFQEPTPIQRQAIPILLSGRECFACAPTGSGKTLAFLFPILMKIKPGSKEGVKAVILCPTRELAAQTTRECKKLAKGRKFYIKLMTKDLSKSGNFKDMHCDILISTPLRLDHAVQKRDLDLSRVEYLVLDESDKLFELGFVEVIDSVVKACSNPSIIRSLFSATLPDSIETLARTIMHDAVRVIVGRKNSASSLIKQKLIFAGTEKGKLLALRQSFAESLNPPVLIFVQSKERAKELYKELAFDDVRADVIHADLDEEQRQDAVDNLRAGKTWVLIATEVIARGMDFKGVNCVINYDFPESASAYIHRIGRSGRAGRSGEAITFFTEEDKPFLRNIANVLISSGCEVPSWIKALPKLKRKKHRVNRDPISTLPDED.

The segment at 24–73 (DFARFRQGPPAPDVASAAAPSPEKKRKRQSKAKAKKSKKRRAEGADSASD) is disordered. Residues 47–64 (KKRKRQSKAKAKKSKKRR) are compositionally biased toward basic residues. A coiled-coil region spans residues 101 to 129 (KSEDSEVVRRRKEVEREIERAAILRKKFD). The Q motif motif lies at 146–174 (ELVSRYGCDSYLVGNLSKLGFQEPTPIQR). One can recognise a Helicase ATP-binding domain in the interval 177–347 (IPILLSGREC…RTIMHDAVRV (171 aa)). 190-197 (APTGSGKT) contacts ATP. The short motif at 294–297 (DESD) is the DEAD box element. Residues 375–519 (ALRQSFAESL…EVPSWIKALP (145 aa)) enclose the Helicase C-terminal domain.

This sequence belongs to the DEAD box helicase family. DDX52/ROK1 subfamily.

The enzyme catalyses ATP + H2O = ADP + phosphate + H(+). The chain is DEAD-box ATP-dependent RNA helicase 57 from Oryza sativa subsp. japonica (Rice).